A 554-amino-acid polypeptide reads, in one-letter code: Dihydroxy-acid dehydratase (554 aa).

Residue Asp-78 participates in Mg(2+) binding. Cys-119 provides a ligand contact to [2Fe-2S] cluster. 2 residues coordinate Mg(2+): Asp-120 and Lys-121. Residue Lys-121 is modified to N6-carboxylysine. Cys-191 provides a ligand contact to [2Fe-2S] cluster. Glu-442 lines the Mg(2+) pocket. Catalysis depends on Ser-468, which acts as the Proton acceptor.

It belongs to the IlvD/Edd family. In terms of assembly, homodimer. [2Fe-2S] cluster is required as a cofactor. Requires Mg(2+) as cofactor.

The catalysed reaction is (2R)-2,3-dihydroxy-3-methylbutanoate = 3-methyl-2-oxobutanoate + H2O. It carries out the reaction (2R,3R)-2,3-dihydroxy-3-methylpentanoate = (S)-3-methyl-2-oxopentanoate + H2O. The protein operates within amino-acid biosynthesis; L-isoleucine biosynthesis; L-isoleucine from 2-oxobutanoate: step 3/4. It participates in amino-acid biosynthesis; L-valine biosynthesis; L-valine from pyruvate: step 3/4. Functions in the biosynthesis of branched-chain amino acids. Catalyzes the dehydration of (2R,3R)-2,3-dihydroxy-3-methylpentanoate (2,3-dihydroxy-3-methylvalerate) into 2-oxo-3-methylpentanoate (2-oxo-3-methylvalerate) and of (2R)-2,3-dihydroxy-3-methylbutanoate (2,3-dihydroxyisovalerate) into 2-oxo-3-methylbutanoate (2-oxoisovalerate), the penultimate precursor to L-isoleucine and L-valine, respectively. This chain is Dihydroxy-acid dehydratase, found in Acetivibrio thermocellus (strain ATCC 27405 / DSM 1237 / JCM 9322 / NBRC 103400 / NCIMB 10682 / NRRL B-4536 / VPI 7372) (Clostridium thermocellum).